The sequence spans 250 residues: Ureidoacrylate amidohydrolase RutB (250 aa).

The active-site Proton acceptor is the aspartate 44. Residue lysine 153 is part of the active site. The active-site Nucleophile is the cysteine 186.

This sequence belongs to the isochorismatase family. RutB subfamily.

The enzyme catalyses (Z)-3-ureidoacrylate + H2O + H(+) = (Z)-3-aminoacrylate + NH4(+) + CO2. It catalyses the reaction (Z)-3-ureidoacrylate + H2O = (Z)-3-aminoacrylate + carbamate + H(+). The catalysed reaction is (Z)-2-methylureidoacrylate + H2O + H(+) = (Z)-2-methylaminoacrylate + NH4(+) + CO2. In terms of biological role, hydrolyzes ureidoacrylate to form aminoacrylate and carbamate. The carbamate hydrolyzes spontaneously, thereby releasing one of the nitrogen atoms of the pyrimidine ring as ammonia and one of its carbon atoms as CO2. This Pantoea ananatis (strain LMG 20103) protein is Ureidoacrylate amidohydrolase RutB.